The primary structure comprises 408 residues: Peptidase T (408 aa).

H78 is a binding site for Zn(2+). The active site involves D80. D140 serves as a coordination point for Zn(2+). E173 serves as the catalytic Proton acceptor. The Zn(2+) site is built by E174, D196, and H379.

This sequence belongs to the peptidase M20B family. Zn(2+) is required as a cofactor.

The protein localises to the cytoplasm. It carries out the reaction Release of the N-terminal residue from a tripeptide.. In terms of biological role, cleaves the N-terminal amino acid of tripeptides. In Escherichia fergusonii (strain ATCC 35469 / DSM 13698 / CCUG 18766 / IAM 14443 / JCM 21226 / LMG 7866 / NBRC 102419 / NCTC 12128 / CDC 0568-73), this protein is Peptidase T.